The following is a 258-amino-acid chain: Indole-3-glycerol phosphate synthase (258 aa).

This sequence belongs to the TrpC family.

It carries out the reaction 1-(2-carboxyphenylamino)-1-deoxy-D-ribulose 5-phosphate + H(+) = (1S,2R)-1-C-(indol-3-yl)glycerol 3-phosphate + CO2 + H2O. Its pathway is amino-acid biosynthesis; L-tryptophan biosynthesis; L-tryptophan from chorismate: step 4/5. This Exiguobacterium sibiricum (strain DSM 17290 / CCUG 55495 / CIP 109462 / JCM 13490 / 255-15) protein is Indole-3-glycerol phosphate synthase.